A 280-amino-acid chain; its full sequence is DNA repair protein RecO (280 aa).

The disordered stretch occupies residues 261–280 (DMAHGNHTGQEDLPATASGA).

It belongs to the RecO family.

In terms of biological role, involved in DNA repair and RecF pathway recombination. The polypeptide is DNA repair protein RecO (Mycolicibacterium smegmatis (strain ATCC 700084 / mc(2)155) (Mycobacterium smegmatis)).